The primary structure comprises 327 residues: Annexin A8 (327 aa).

Annexin repeat units follow at residues 21 to 92 (FNPD…ALMY), 93 to 164 (PPYR…CLLQ), 177 to 249 (GLAL…TVVK), and 253 to 324 (NVHS…NLVG). Positions 266, 268, 270, and 310 each coordinate Ca(2+).

The protein belongs to the annexin family.

This protein is an anticoagulant protein that acts as an indirect inhibitor of the thromboplastin-specific complex, which is involved in the blood coagulation cascade. The sequence is that of Annexin A8 (Anxa8) from Rattus norvegicus (Rat).